Reading from the N-terminus, the 277-residue chain is Formamidopyrimidine-DNA glycosylase (277 aa).

Residue Pro2 is the Schiff-base intermediate with DNA of the active site. The active-site Proton donor is the Glu3. The active-site Proton donor; for beta-elimination activity is the Lys58. The DNA site is built by His97, Arg116, and Arg158. The FPG-type zinc finger occupies 243 to 277 (NVYGRAGAPCPRCGRSIRQRRIAQRSTWYCPGCQR). Arg267 acts as the Proton donor; for delta-elimination activity in catalysis.

This sequence belongs to the FPG family. As to quaternary structure, monomer. The cofactor is Zn(2+).

The enzyme catalyses Hydrolysis of DNA containing ring-opened 7-methylguanine residues, releasing 2,6-diamino-4-hydroxy-5-(N-methyl)formamidopyrimidine.. It carries out the reaction 2'-deoxyribonucleotide-(2'-deoxyribose 5'-phosphate)-2'-deoxyribonucleotide-DNA = a 3'-end 2'-deoxyribonucleotide-(2,3-dehydro-2,3-deoxyribose 5'-phosphate)-DNA + a 5'-end 5'-phospho-2'-deoxyribonucleoside-DNA + H(+). Its function is as follows. Involved in base excision repair of DNA damaged by oxidation or by mutagenic agents. Acts as a DNA glycosylase that recognizes and removes damaged bases. Has a preference for oxidized purines, such as 7,8-dihydro-8-oxoguanine (8-oxoG). Has AP (apurinic/apyrimidinic) lyase activity and introduces nicks in the DNA strand. Cleaves the DNA backbone by beta-delta elimination to generate a single-strand break at the site of the removed base with both 3'- and 5'-phosphates. This Alkalilimnicola ehrlichii (strain ATCC BAA-1101 / DSM 17681 / MLHE-1) protein is Formamidopyrimidine-DNA glycosylase.